Reading from the N-terminus, the 333-residue chain is Transcription factor HHO6 (333 aa).

One can recognise an HTH myb-type domain in the interval 189-249 (ALRKQRRCWN…HLQKYRLHIR (61 aa)). A DNA-binding region (H-T-H motif) is located at residues 220–245 (PKQIREHMQEEGLTNDEVKSHLQKYR). The disordered stretch occupies residues 274-333 (DEEETCEGGESLKRSNAQSDSPQGPLQLPSTTTTTGGDSSMEDVEDAKSESFQLERLRSP). The segment covering 287-303 (RSNAQSDSPQGPLQLPS) has biased composition (polar residues). Positions 319-333 (DAKSESFQLERLRSP) are enriched in basic and acidic residues.

It localises to the nucleus. Probable transcription factor involved in phosphate signaling in roots. The protein is Transcription factor HHO6 of Arabidopsis thaliana (Mouse-ear cress).